Consider the following 431-residue polypeptide: Enolase (431 aa).

(2R)-2-phosphoglycerate is bound at residue Gln163. Residue Glu205 is the Proton donor of the active site. Mg(2+) contacts are provided by Asp242, Glu288, and Asp315. 4 residues coordinate (2R)-2-phosphoglycerate: Lys340, Arg369, Ser370, and Lys391. Lys340 functions as the Proton acceptor in the catalytic mechanism.

This sequence belongs to the enolase family. It depends on Mg(2+) as a cofactor.

The protein localises to the cytoplasm. Its subcellular location is the secreted. The protein resides in the cell surface. The catalysed reaction is (2R)-2-phosphoglycerate = phosphoenolpyruvate + H2O. It participates in carbohydrate degradation; glycolysis; pyruvate from D-glyceraldehyde 3-phosphate: step 4/5. Catalyzes the reversible conversion of 2-phosphoglycerate (2-PG) into phosphoenolpyruvate (PEP). It is essential for the degradation of carbohydrates via glycolysis. The protein is Enolase of Bacillus cereus (strain B4264).